Consider the following 415-residue polypeptide: Granaticin polyketide putative beta-ketoacyl synthase 2 (415 aa).

Residues 6 to 406 enclose the Ketosynthase family 3 (KS3) domain; the sequence is RRRAVVTGLS…GFNSAVVVTL (401 aa).

This sequence belongs to the thiolase-like superfamily. Beta-ketoacyl-ACP synthases family.

It functions in the pathway antibiotic biosynthesis; granaticin biosynthesis. The sequence is that of Granaticin polyketide putative beta-ketoacyl synthase 2 (gra-orf2) from Streptomyces violaceoruber.